Here is a 178-residue protein sequence, read N- to C-terminus: Colicin-A immunity protein (178 aa).

Residues 1–13 are Cytoplasmic-facing; that stretch reads MMNEHSIDTDNRK. A helical membrane pass occupies residues 14 to 37; that stretch reads ANNALYLFIIIGLIPLLCIFVVYY. Residues 38–68 are Periplasmic-facing; it reads KTPDALLLRKIATSTENLPSITSSYNPLMTK. Residues 69-89 traverse the membrane as a helical segment; it reads VMDIYCKTAPFLALILYILTF. Residues 90–105 are Cytoplasmic-facing; the sequence is KIRKLINNTDRNTVLR. Residues 106-123 traverse the membrane as a helical segment; it reads SCLLSPLVYAAIVYLFCF. Topologically, residues 124–142 are periplasmic; it reads RNFELTTAGRPVRLMATND. Residues 143-165 form a helical membrane-spanning segment; the sequence is ATLLLFYIGLYSIIFFTTYITLF. Residues 166 to 178 are Cytoplasmic-facing; the sequence is TPVTAFKLLKKRQ.

The protein resides in the cell inner membrane. Its function is as follows. This protein is able to protect a cell, which harbors the plasmid ColA encoding colicin A, against colicin A. The protein is Colicin-A immunity protein (cai) of Citrobacter freundii.